The sequence spans 486 residues: Aromatic-L-amino-acid decarboxylase (486 aa).

Position 1 is an N-acetylmethionine (M1). 2 repeat units span residues 58–115 (QDVE…TELE) and 118–178 (MMDW…TQGA). A 2 X approximate tandem repeats region spans residues 58–178 (QDVEKIIMPG…AASPGLTQGA (121 aa)). Residue T82 participates in substrate binding. Positions 148 and 149 each coordinate pyridoxal 5'-phosphate. H192 provides a ligand contact to substrate. Pyridoxal 5'-phosphate is bound by residues T246 and N300. K303 carries the N6-(pyridoxal phosphate)lysine modification.

This sequence belongs to the group II decarboxylase family. Homodimer. It depends on pyridoxal 5'-phosphate as a cofactor.

It catalyses the reaction L-dopa + H(+) = dopamine + CO2. It carries out the reaction 5-hydroxy-L-tryptophan + H(+) = serotonin + CO2. Its pathway is catecholamine biosynthesis; dopamine biosynthesis; dopamine from L-tyrosine: step 2/2. Functionally, catalyzes the decarboxylation of L-3,4-dihydroxyphenylalanine (DOPA) to dopamine and L-5-hydroxytryptophan to serotonin. The protein is Aromatic-L-amino-acid decarboxylase (DDC) of Sus scrofa (Pig).